The following is a 520-amino-acid chain: Macrophage receptor MARCO (520 aa).

Topologically, residues 1–43 (MRNKKILKEDELLSETQQAAFHQIAMEPFEINVPKPKRRNGVN) are cytoplasmic. A helical; Signal-anchor for type II membrane protein transmembrane segment spans residues 44–64 (FSLAVVVIYLILLTAGAGLLV). The Extracellular portion of the chain corresponds to 65–520 (VQVLNLQARL…EEDAGVECSV (456 aa)). 2 N-linked (GlcNAc...) asparagine glycosylation sites follow: asparagine 83 and asparagine 136. The tract at residues 142–423 (GMFRIKGEQG…KGERGENSVS (282 aa)) is disordered. Residues 147–419 (KGEQGAPGLQ…VKGEKGERGE (273 aa)) enclose the Collagen-like domain. Low complexity-rich tracts occupy residues 203–227 (EAGL…PQGE), 290–345 (LAGF…PGAT), and 380–398 (SPGL…QKGD). The span at 410-419 (VKGEKGERGE) shows a compositional bias: basic and acidic residues. The SRCR domain occupies 424–519 (VRIVGSSNRG…HEEDAGVECS (96 aa)). Cystine bridges form between cysteine 447–cysteine 508, cysteine 460–cysteine 518, and cysteine 488–cysteine 498.

Homotrimer; disulfide-linked. Trimers may assemble in larger oligomers thus resulting in the creation of a large surface capable of interacting with very large ligands. Post-translationally, N-glycosylated. As to expression, expressed in alveolar macrophages (at protein level). Detected in macrophages from various tissues including thymus, kidney, Kupffer cells of liver, and spleen.

The protein localises to the cell membrane. Pattern recognition receptor (PRR) which binds Gram-positive and Gram-negative bacteria. Also plays a role in binding of unopsonized particles by alveolar macrophages. Binds to the secretoglobin SCGB3A2. The polypeptide is Macrophage receptor MARCO (MARCO) (Homo sapiens (Human)).